The following is a 78-amino-acid chain: Large ribosomal subunit protein uL24 (78 aa).

Residues P52–G78 are disordered.

It belongs to the universal ribosomal protein uL24 family. Part of the 50S ribosomal subunit.

Functionally, one of two assembly initiator proteins, it binds directly to the 5'-end of the 23S rRNA, where it nucleates assembly of the 50S subunit. One of the proteins that surrounds the polypeptide exit tunnel on the outside of the subunit. This Campylobacter concisus (strain 13826) protein is Large ribosomal subunit protein uL24.